Here is a 502-residue protein sequence, read N- to C-terminus: ATP synthase subunit alpha (502 aa).

Positions 115–137 (VDGLGPVETTETRPIESPAPGVM) are disordered. ATP is bound at residue 169 to 176 (GDRQTGKT).

It belongs to the ATPase alpha/beta chains family. In terms of assembly, F-type ATPases have 2 components, CF(1) - the catalytic core - and CF(0) - the membrane proton channel. CF(1) has five subunits: alpha(3), beta(3), gamma(1), delta(1), epsilon(1). CF(0) has three main subunits: a(1), b(2) and c(9-12). The alpha and beta chains form an alternating ring which encloses part of the gamma chain. CF(1) is attached to CF(0) by a central stalk formed by the gamma and epsilon chains, while a peripheral stalk is formed by the delta and b chains.

It is found in the cell membrane. The catalysed reaction is ATP + H2O + 4 H(+)(in) = ADP + phosphate + 5 H(+)(out). In terms of biological role, produces ATP from ADP in the presence of a proton gradient across the membrane. The alpha chain is a regulatory subunit. This chain is ATP synthase subunit alpha, found in Geobacillus kaustophilus (strain HTA426).